A 298-amino-acid polypeptide reads, in one-letter code: Tyrosine recombinase XerC (298 aa).

One can recognise a Core-binding (CB) domain in the interval threonine 2–valine 88. Residues histidine 109–aspartate 288 form the Tyr recombinase domain. Catalysis depends on residues arginine 148, lysine 172, histidine 240, arginine 243, and histidine 266. Tyrosine 275 functions as the O-(3'-phospho-DNA)-tyrosine intermediate in the catalytic mechanism.

It belongs to the 'phage' integrase family. XerC subfamily. As to quaternary structure, forms a cyclic heterotetrameric complex composed of two molecules of XerC and two molecules of XerD, in which XerC interacts with XerD via its C-terminal region, XerD interacts with XerC via its C-terminal region and so on.

The protein localises to the cytoplasm. Its activity is regulated as follows. FtsK may regulate the catalytic switch between XerC and XerD in the heterotetrameric complex during the two steps of the recombination process. In terms of biological role, site-specific tyrosine recombinase, which acts by catalyzing the cutting and rejoining of the recombining DNA molecules. Binds cooperatively to specific DNA consensus sequences that are separated from XerD binding sites by a short central region, forming the heterotetrameric XerC-XerD complex that recombines DNA substrates. The complex is essential to convert dimers of the bacterial chromosome into monomers to permit their segregation at cell division. It also contributes to the segregational stability of plasmids. In the complex XerC specifically exchanges the top DNA strands. The polypeptide is Tyrosine recombinase XerC (Escherichia coli O139:H28 (strain E24377A / ETEC)).